Reading from the N-terminus, the 288-residue chain is Nucleotide-binding protein Gura_2968 (288 aa).

Residue 8–15 coordinates ATP; the sequence is GLSGSGKS. A GTP-binding site is contributed by 59-62; the sequence is DIRG.

Belongs to the RapZ-like family.

Its function is as follows. Displays ATPase and GTPase activities. The chain is Nucleotide-binding protein Gura_2968 from Geotalea uraniireducens (strain Rf4) (Geobacter uraniireducens).